We begin with the raw amino-acid sequence, 261 residues long: Troponin T, slow skeletal muscle (261 aa).

Residues 1-30 are compositionally biased toward acidic residues; sequence MSDTEEQEYEEEQAEDEEAVEEEAPEEPEP. Disordered regions lie at residues 1-61 and 108-152; these read MSDT…ERVD and ERAE…KKKV. Ser-2 is subject to Phosphoserine; by CK2. Positions 31–40 are enriched in basic and acidic residues; that stretch reads VAEREEERPK. Pro residues predominate over residues 42-54; it reads SRPVVPPLIPPKI. Residues 108–148 show a composition bias toward basic and acidic residues; it reads ERAEQQRFRTEKERERQAKLAEEKMRKEEEEAKKRAEDDAK.

It belongs to the troponin T family. Interacts with TPM3. In terms of tissue distribution, expressed in soleus muscle. Isoform 4 is predominantly expressed in fast muscles.

Its function is as follows. Troponin T is the tropomyosin-binding subunit of troponin, the thin filament regulatory complex which confers calcium-sensitivity to striated muscle actomyosin ATPase activity. The sequence is that of Troponin T, slow skeletal muscle (Tnnt1) from Rattus norvegicus (Rat).